A 459-amino-acid chain; its full sequence is MTLHLDDLRVRLLGECRYDSPFAEVLSTKRTSPHYVAEGDRVLLEDTVAMLAEHSLPSVQAPSFEAAGPRRKIYFDPARVTAGIVTCGGLCPGLNNVIRGLVQELSVHYRVKRIVGFRNGPGLTAAHRDDTVELTPEVVRDIHNLGGTILGSSRGGQDADEMVETLALHGVDVMFVIGGDGGMRAATFLSGAIRARGLDIAVIGVPKTIDNDLPFTDQSFGFQSAFARATDFISAVSVEAAASPNGVGIVKLMGRHSGFIAAYAALAANSADVVLIPEVPFALDGDDGLLAHVERLVRAKGFAVVVVAEGAGQDLFDAHGLPQLNGRGTDASGNVKLGNIGELLRTSIEAHLTAAGLAPTMRYIDPSYAIRSIPANAYDSVYCLRLAHAAVHAAMAGRTEAAVARWRRRFVHVPFSLMTRRRNQVDPDGDLWMSVLETTCQPAEFGAVAARERISSGFC.

ATP contacts are provided by residues Gly89, 154–155 (RG), and 179–182 (GDGG). Residue Asp180 coordinates Mg(2+). Substrate-binding positions include 208–210 (TID), 253–255 (MGR), Glu309, and 368–371 (YAIR). Asp210 acts as the Proton acceptor in catalysis.

The protein belongs to the phosphofructokinase type A (PFKA) family. PPi-dependent PFK group II subfamily. Atypical ATP-dependent clade 'X' sub-subfamily. In terms of assembly, homodimer. Mg(2+) is required as a cofactor.

Its subcellular location is the cytoplasm. It carries out the reaction beta-D-fructose 6-phosphate + ATP = beta-D-fructose 1,6-bisphosphate + ADP + H(+). The protein operates within carbohydrate degradation; glycolysis; D-glyceraldehyde 3-phosphate and glycerone phosphate from D-glucose: step 3/4. AMP causes 20-40% inhibition and diphosphate causes 20-50% inhibition. ADP, citrate, PEP and FBP have no effect. In terms of biological role, catalyzes the phosphorylation of D-fructose 6-phosphate to fructose 1,6-bisphosphate by ATP, the first committing step of glycolysis. In Amycolatopsis methanolica, this protein is ATP-dependent 6-phosphofructokinase.